Here is a 537-residue protein sequence, read N- to C-terminus: uncharacterized protein (537 aa).

A signal peptide spans 1–15; the sequence is MALFQLFSFLNVTLG. 2 helical membrane-spanning segments follow: residues 459–479 and 490–510; these read VLFS…GCCF and VILL…LGFT.

It is found in the host membrane. This is an uncharacterized protein from Citrus sinensis (Sweet orange).